Consider the following 386-residue polypeptide: Paralemmin-1 (386 aa).

Positions 4–115 form a coiled coil; the sequence is VEANTLQQER…TKENLAEAAA (112 aa). 4 disordered regions span residues 21–40, 51–149, 240–290, and 321–378; these read RKRQ…DRRQ, ERWL…PMKA, EATA…TMIF, and DAES…AKKQ. Composition is skewed to basic and acidic residues over residues 24-40 and 68-95; these read QTEI…DRRQ and AMKK…RELE. Low complexity predominate over residues 97-116; sequence LENSSSVTSTKENLAEAAAP. Basic and acidic residues-rich tracts occupy residues 259 to 282, 322 to 334, and 365 to 377; these read PRRE…EPSR, AESK…KDHA, and EAKE…DAKK. 2 S-palmitoyl cysteine lipidation sites follow: cysteine 380 and cysteine 382. Cysteine 383 bears the Cysteine methyl ester mark. Residue cysteine 383 is the site of S-farnesyl cysteine attachment. Positions 384–386 are cleaved as a propeptide — removed in mature form; it reads TVM.

Belongs to the paralemmin family. Interacts with dopamine receptor DRD3. Post-translationally, phosphorylated. Expressed in the lens (at protein level). Highly expressed in forebrain and cerebellum with lower expression in adrenal gland and heart. Expression weak or undetectable in other tissues.

Its subcellular location is the cell membrane. The protein localises to the cell projection. It localises to the filopodium membrane. The protein resides in the axon. It is found in the dendrite. Its subcellular location is the dendritic spine. The protein localises to the basolateral cell membrane. It localises to the apicolateral cell membrane. Functionally, involved in plasma membrane dynamics and cell process formation. Isoform 1 and isoform 2 are necessary for axonal and dendritic filopodia induction, for dendritic spine maturation and synapse formation in a palmitoylation-dependent manner. This chain is Paralemmin-1 (PALM), found in Gallus gallus (Chicken).